Here is a 600-residue protein sequence, read N- to C-terminus: NADH-quinone oxidoreductase subunit C/D (600 aa).

Positions 1 to 190 are NADH dehydrogenase I subunit C; the sequence is MVNNMTDLTA…SPFELTKAKQ (190 aa). The interval 214 to 600 is NADH dehydrogenase I subunit D; it reads DFMFLNLGPN…IDFVMSDVDR (387 aa).

This sequence in the N-terminal section; belongs to the complex I 30 kDa subunit family. In the C-terminal section; belongs to the complex I 49 kDa subunit family. NDH-1 is composed of 13 different subunits. Subunits NuoB, CD, E, F, and G constitute the peripheral sector of the complex.

The protein resides in the cell inner membrane. It catalyses the reaction a quinone + NADH + 5 H(+)(in) = a quinol + NAD(+) + 4 H(+)(out). NDH-1 shuttles electrons from NADH, via FMN and iron-sulfur (Fe-S) centers, to quinones in the respiratory chain. The immediate electron acceptor for the enzyme in this species is believed to be ubiquinone. Couples the redox reaction to proton translocation (for every two electrons transferred, four hydrogen ions are translocated across the cytoplasmic membrane), and thus conserves the redox energy in a proton gradient. The protein is NADH-quinone oxidoreductase subunit C/D of Escherichia coli (strain K12 / DH10B).